Here is a 451-residue protein sequence, read N- to C-terminus: UDP-N-acetylmuramoylalanine--D-glutamate ligase (451 aa).

Residue Gly119–Thr125 coordinates ATP.

This sequence belongs to the MurCDEF family.

The protein localises to the cytoplasm. It catalyses the reaction UDP-N-acetyl-alpha-D-muramoyl-L-alanine + D-glutamate + ATP = UDP-N-acetyl-alpha-D-muramoyl-L-alanyl-D-glutamate + ADP + phosphate + H(+). It functions in the pathway cell wall biogenesis; peptidoglycan biosynthesis. Its function is as follows. Cell wall formation. Catalyzes the addition of glutamate to the nucleotide precursor UDP-N-acetylmuramoyl-L-alanine (UMA). This Streptococcus mutans serotype c (strain ATCC 700610 / UA159) protein is UDP-N-acetylmuramoylalanine--D-glutamate ligase.